A 343-amino-acid polypeptide reads, in one-letter code: Programmed cell death protein 2 (343 aa).

Residues C134, C137, C145, C148, C154, H158, H167, and C171 each coordinate Zn(2+). The segment at 134-171 adopts an MYND-type; atypical zinc-finger fold; sequence CRVCGCLAPMTCSRCKQAHYCSKEHQTLDWQLGHKQAC.

In terms of processing, ubiquitinated by PRKN, promoting proteasomal degradation.

It is found in the nucleus. Its function is as follows. May be a DNA-binding protein with a regulatory function. May play an important role in cell death and/or in regulation of cell proliferation. This is Programmed cell death protein 2 (Pdcd2) from Rattus norvegicus (Rat).